We begin with the raw amino-acid sequence, 302 residues long: Sulfate adenylyltransferase subunit 2 (302 aa).

This sequence belongs to the PAPS reductase family. CysD subfamily. Heterodimer composed of CysD, the smaller subunit, and CysN.

The catalysed reaction is sulfate + ATP + H(+) = adenosine 5'-phosphosulfate + diphosphate. Its pathway is sulfur metabolism; hydrogen sulfide biosynthesis; sulfite from sulfate: step 1/3. With CysN forms the ATP sulfurylase (ATPS) that catalyzes the adenylation of sulfate producing adenosine 5'-phosphosulfate (APS) and diphosphate, the first enzymatic step in sulfur assimilation pathway. APS synthesis involves the formation of a high-energy phosphoric-sulfuric acid anhydride bond driven by GTP hydrolysis by CysN coupled to ATP hydrolysis by CysD. The protein is Sulfate adenylyltransferase subunit 2 of Aeromonas hydrophila subsp. hydrophila (strain ATCC 7966 / DSM 30187 / BCRC 13018 / CCUG 14551 / JCM 1027 / KCTC 2358 / NCIMB 9240 / NCTC 8049).